The chain runs to 160 residues: MPSFDIVSEVKMNEVLNAVDNANRELATRFDFRGVEASFELNKEEVKLEADADFQLKQMVEILRAALLKRNIENSSMDVGDSVHSGKRFHLNVKFKQGIEKEIAKKLVKLIKDSKIKVQVAIQGDEVRVTGKKRDDLQEAMALVRGAELGQPMQFQNFRD.

This sequence belongs to the YajQ family.

Functionally, nucleotide-binding protein. The polypeptide is Nucleotide-binding protein ASA_3207 (Aeromonas salmonicida (strain A449)).